A 676-amino-acid polypeptide reads, in one-letter code: MVDQEKAKLELDKLNKQIQHHDVLYYVQDNPEISDAEYDELCRKRNLILNAFPKLTQSNDYQNNIGSSPDTKFAKVKHEEKMFSLDNAFNQQDVEKFITRTKKFLNINDNQSIPLSCELKIDGLSFSVIYKKGEIYQASTRGNGYFGENITTNVKTIKNLPHIIHNAPDLLEVRGEIYIDRCDFIQLNNDGNNFANPRNAAAGSVRQLDHNITAQRKLKYFMYTIVNTACLTQEELLYQLKIWGFCVNEHTITTDNIEEAFNFYNQVYNNRSNINYDIDGIIYKVNDIKSQHILGTTSKSPRWAIAYKFPAAEAKTQLNKISIQIGRTGVLTPIAELSPINIGGVIVTRASLHNKNEIERKDIREGDYVIVKRAGDVIPQIVDVDKNLRTQELTKFVFPTTCPSCGSSVYQAKQEASIYCTGELFCKDQILEKIKHFVSKDAFNIIGFGKKQLLFFYEQRLITNITDIFTLEEKISNSDVKLESLHGWGEKSMSNLFSAINNSKVISLENFIFALGIRFIGKYIAKILANHFSSYETWYNEMLKLAQNEDYSLNIQQIGSKTIGSLKMFFSQPHNLNMINDLVKHLTITDTQSSSYLSLIHGKIIVFTGELSSMSRSEAKIRSETAGAKVSSSLSKNTDFLIAGNNPGSKYKKAQSLNVQILTEDLWLQYTQSSEN.

NAD(+) is bound by residues 35 to 39 (DAEYD), 84 to 85 (SL), and Glu118. The active-site N6-AMP-lysine intermediate is Lys120. 4 residues coordinate NAD(+): Arg141, Glu176, Lys284, and Lys308. Positions 402, 405, 420, and 426 each coordinate Zn(2+). The region spanning 595–676 (SYLSLIHGKI…WLQYTQSSEN (82 aa)) is the BRCT domain.

Belongs to the NAD-dependent DNA ligase family. LigA subfamily. Requires Mg(2+) as cofactor. The cofactor is Mn(2+).

It catalyses the reaction NAD(+) + (deoxyribonucleotide)n-3'-hydroxyl + 5'-phospho-(deoxyribonucleotide)m = (deoxyribonucleotide)n+m + AMP + beta-nicotinamide D-nucleotide.. DNA ligase that catalyzes the formation of phosphodiester linkages between 5'-phosphoryl and 3'-hydroxyl groups in double-stranded DNA using NAD as a coenzyme and as the energy source for the reaction. It is essential for DNA replication and repair of damaged DNA. This Ehrlichia chaffeensis (strain ATCC CRL-10679 / Arkansas) protein is DNA ligase.